A 444-amino-acid polypeptide reads, in one-letter code: Glutamate--tRNA ligase 1 (444 aa).

A 'HIGH' region motif is present at residues 7-17 (PSPTGYLHVGN). Positions 238-242 (KISKR) match the 'KMSKS' region motif. K241 is a binding site for ATP.

It belongs to the class-I aminoacyl-tRNA synthetase family. Glutamate--tRNA ligase type 1 subfamily. In terms of assembly, monomer.

Its subcellular location is the cytoplasm. The enzyme catalyses tRNA(Glu) + L-glutamate + ATP = L-glutamyl-tRNA(Glu) + AMP + diphosphate. Catalyzes the attachment of glutamate to tRNA(Glu) in a two-step reaction: glutamate is first activated by ATP to form Glu-AMP and then transferred to the acceptor end of tRNA(Glu). This is Glutamate--tRNA ligase 1 from Wolbachia pipientis subsp. Culex pipiens (strain wPip).